An 823-amino-acid polypeptide reads, in one-letter code: Aminopeptidase O (823 aa).

His481 lines the Zn(2+) pocket. Catalysis depends on Glu482, which acts as the Proton acceptor. 2 residues coordinate Zn(2+): His485 and Glu504. The Nucleolar localization signal motif lies at Arg693–Arg703.

Belongs to the peptidase M1 family. Zn(2+) is required as a cofactor. In terms of tissue distribution, expressed in testis, heart, brain, lung, liver, skeletal muscle, kidney and ovary. Expressed in vascular tissues.

The protein localises to the nucleus. The protein resides in the nucleolus. It localises to the cytoplasm. Its function is as follows. Aminopeptidase which catalyzes the hydrolysis of amino acid residues from the N-terminus of peptide or protein substrates. In Mus musculus (Mouse), this protein is Aminopeptidase O (Aopep).